A 537-amino-acid polypeptide reads, in one-letter code: Phosphoenolpyruvate carboxykinase (ATP) (537 aa).

Residues Arg-61, Tyr-195, and Lys-201 each contribute to the substrate site. ATP-binding positions include Lys-201, His-220, and Gly-236 to Thr-244. Residues Lys-201 and His-220 each contribute to the Mn(2+) site. Asp-257 provides a ligand contact to Mn(2+). Glu-285 lines the ATP pocket. The span at Asp-312–Asn-321 shows a compositional bias: basic and acidic residues. A disordered region spans residues Asp-312 to Arg-339. A substrate-binding site is contributed by Arg-323. Arg-323 and Thr-448 together coordinate ATP.

The protein belongs to the phosphoenolpyruvate carboxykinase (ATP) family. Requires Mn(2+) as cofactor.

It is found in the cytoplasm. It catalyses the reaction oxaloacetate + ATP = phosphoenolpyruvate + ADP + CO2. It participates in carbohydrate biosynthesis; gluconeogenesis. Involved in the gluconeogenesis. Catalyzes the conversion of oxaloacetate (OAA) to phosphoenolpyruvate (PEP) through direct phosphoryl transfer between the nucleoside triphosphate and OAA. The protein is Phosphoenolpyruvate carboxykinase (ATP) of Rhodopseudomonas palustris (strain BisB18).